The chain runs to 258 residues: MKRIAMLAAACVIAVPAFAQNVATVNGKPITQKSLDEFVKLVVSQGATDSPQLREQIKQEMINRQVFVQAAEKDGVAKQADVQTEIELARQGILVRALMADYLQKHPVTDAQVKAEYEKIKKEQAGKMEYKVRHILVEDEKTANDLLAQVKSNKNKFDDLAKKNSKDPGSAERGGDLGWAPATNYVQPFAEAVTKLKKGQLVDKPVQTQFGWHVIQVDDTRPVEFPAMDQVRPQLEEMLRQQTLANYQKQLREQAKIQ.

Residues 1-19 (MKRIAMLAAACVIAVPAFA) form the signal peptide. A PpiC domain is found at 127–219 (KMEYKVRHIL…FGWHVIQVDD (93 aa)).

Belongs to the PpiC/parvulin rotamase family.

The catalysed reaction is [protein]-peptidylproline (omega=180) = [protein]-peptidylproline (omega=0). The sequence is that of Probable parvulin-type peptidyl-prolyl cis-trans isomerase from Bordetella parapertussis (strain 12822 / ATCC BAA-587 / NCTC 13253).